An 896-amino-acid chain; its full sequence is Androgen receptor (896 aa).

The segment at 1–534 (MEVQLGLGRV…PIDYYFPPQK (534 aa)) is modulating. The segment at 1–563 (MEVQLGLGRV…GSCKVFFKRA (563 aa)) is interaction with ZNF318. Disordered regions lie at residues 35-152 (QNPG…LSLL) and 178-218 (LLQQ…YLGG). Positions 54-78 (LQQQQLQQQETSPRRQQQQQQQPSE) are enriched in low complexity. S65 is modified (phosphoserine; by CDK9). S81 carries the phosphoserine modification. The span at 178 to 189 (LLQQQQQQQQQQ) shows a compositional bias: low complexity. Residues 190–199 (EAVSEGNSSG) are compositionally biased toward polar residues. A Phosphotyrosine; by CSK modification is found at Y215. Residue S248 is modified to Phosphoserine. Y259 carries the phosphotyrosine; by CSK and TNK2 modification. Y299, Y338, Y349, and Y354 each carry phosphotyrosine; by CSK. Position 355 is a phosphotyrosine; by CSK and TNK2 (Y355). A Glycyl lysine isopeptide (Lys-Gly) (interchain with G-Cter in SUMO) cross-link involves residue K378. The residue at position 385 (Y385) is a Phosphotyrosine; by CSK. A Glycyl lysine isopeptide (Lys-Gly) (interchain with G-Cter in SUMO) cross-link involves residue K497. Phosphotyrosine; by CSK occurs at positions 511 and 528. An interaction with LPXN region spans residues 528-895 (YYFPPQKTCL…GKVKPIYFHT (368 aa)). The nuclear receptor DNA-binding region spans 535–608 (TCLICGDEAS…AGMTLGARKL (74 aa)). 2 NR C4-type zinc fingers span residues 536–556 (CLIC…CGSC) and 572–596 (CASR…LRKC). Residues 548-638 (YGALTCGSCK…TEEPAQKLTV (91 aa)) are interaction with HIPK3. An interaction with CCAR1 region spans residues 568 to 895 (QKYLCASRND…GKVKPIYFHT (328 aa)). Residues 601 to 895 (MTLGARKLKK…GKVKPIYFHT (295 aa)) form an interaction with KAT7 region. Position 627 is a phosphoserine; by STK4/MST1 (S627). Positions 645–876 (ECQPIFLNVL…DFPEMMAEII (232 aa)) constitute an NR LBD domain. 2 residues coordinate 17beta-hydroxy-5alpha-androstan-3-one: N682 and R729. Glycyl lysine isopeptide (Lys-Gly) (interchain with G-Cter in ubiquitin) cross-links involve residues K822 and K824. T854 provides a ligand contact to 17beta-hydroxy-5alpha-androstan-3-one. At Y892 the chain carries Phosphotyrosine; by CSK.

It belongs to the nuclear hormone receptor family. NR3 subfamily. As to quaternary structure, binds DNA as a homodimer. Part of a ternary complex containing AR, EFCAB6/DJBP and PARK7. Interacts with HIPK3 and NR0B2 in the presence of androgen. The ligand binding domain interacts with KAT7/HBO1 in the presence of dihydrotestosterone. Interacts with EFCAB6/DJBP, PQBP1, RANBP9, RBAK, SPDEF, SRA1, TGFB1I1 and RREB1. Interacts with ZMIZ1/ZIMP10 and ZMIZ2/ZMIP7 which both enhance its transactivation activity. Interacts with SLC30A9 and RAD54L2/ARIP4. Interacts with MACROD1 (via macro domain). Interacts via the ligand-binding domain with LXXLL and FXXLF motifs from NCOA1, NCOA2, NCOA3 and MAGEA11. Interacts (via nuclear receptor DNA binding domain and nuclear receptor ligand binding domain) with NCOA4. The AR N-terminal poly-Gln region binds Ran resulting in enhancement of AR-mediated transactivation. Ran-binding decreases as the poly-Gln length increases. Interacts with HIP1 (via coiled coil domain). Interacts (via ligand-binding domain) with TRIM68. Interacts with TNK2. Interacts with USP26. Interacts with RNF6. Interacts (regulated by RNF6 probably through polyubiquitination) with RNF14; regulates AR transcriptional activity. Interacts with PRMT2 and TRIM24. Interacts with RACK1. Interacts with RANBP10; this interaction enhances dihydrotestosterone-induced AR transcriptional activity. Interacts with PRPF6 in a hormone-independent way; this interaction enhances dihydrotestosterone-induced AR transcriptional activity. Interacts with STK4/MST1. Interacts with ZIPK/DAPK3. Interacts with LPXN. Interacts with MAK. Part of a complex containing AR, MAK and NCOA3. Interacts with CRY1. Interacts with CCAR1 and GATA2. Interacts with ZNF318. Interacts with BUD31. Interacts with ARID4A. Interacts with ARID4B. Interacts (via NR LBD domain) with ZBTB7A; the interaction is direct and androgen-dependent. Interacts with NCOR1. Interacts with NCOR2. Interacts with CRY2 in a ligand-dependent manner. Post-translationally, phosphorylated in prostate cancer cells in response to several growth factors including EGF. Phosphorylation is induced by c-Src kinase (CSK). Tyr-511 is one of the major phosphorylation sites and an increase in phosphorylation and Src kinase activity is associated with prostate cancer progression. Phosphorylation by TNK2 enhances the DNA-binding and transcriptional activity. Phosphorylation at Ser-65 by CDK9 regulates AR promoter selectivity and cell growth. In terms of processing, sumoylated on Lys-378 (major) and Lys-497. Ubiquitinated. Deubiquitinated by USP26. 'Lys-6' and 'Lys-27'-linked polyubiquitination by RNF6 modulates AR transcriptional activity and specificity. Palmitoylated by ZDHHC7 and ZDHHC21. Palmitoylation is required for plasma membrane targeting and for rapid intracellular signaling via ERK and AKT kinases and cAMP generation.

It localises to the nucleus. The protein resides in the cytoplasm. In terms of biological role, steroid hormone receptors are ligand-activated transcription factors that regulate eukaryotic gene expression and affect cellular proliferation and differentiation in target tissues. Transcription factor activity is modulated by bound coactivator and corepressor proteins like ZBTB7A that recruits NCOR1 and NCOR2 to the androgen response elements/ARE on target genes, negatively regulating androgen receptor signaling and androgen-induced cell proliferation. Transcription activation is also down-regulated by NR0B2. Activated, but not phosphorylated, by HIPK3 and ZIPK/DAPK3. The sequence is that of Androgen receptor (AR) from Sus scrofa (Pig).